Here is a 377-residue protein sequence, read N- to C-terminus: Trans-enoyl reductase FMN2 (377 aa).

The Enoyl reductase (ER) domain occupies 7–370 (NASGGYCLNS…DGVIRGKKLV (364 aa)). Residues 143 to 173 (LSDMTGNGRSNGYTNGHTNGHTNGHSKGEEE) are disordered. Over residues 144-155 (SDMTGNGRSNGY) the composition is skewed to polar residues. Residues 156–167 (TNGHTNGHTNGH) are compositionally biased toward low complexity. NADP(+) is bound by residues 186–189 (ASAS), 209–212 (SPAN), Y227, and 274–275 (LD).

Belongs to the zinc-containing alcohol dehydrogenase family.

The protein operates within secondary metabolite biosynthesis. In terms of biological role, trans-enoyl reductase; part of the gene cluster that mediates the biosynthesis of fusamarins, isocoumarin derivatives that show moderate cytotoxicity with IC(50) values between 1 and 50 uM. The polyketide synthase FMN1 probably synthesizes two different polyketides, a tetra- and a pentaketide, containinga varying number of double bonds depending on the selective actions of the trans-enoyl reductase FMN2. Chain fusion will presumably be mediated by the KS domain before finally offloading is catalyzed by the alpha/beta hydrolase fold enzyme FMN3. This is Trans-enoyl reductase FMN2 from Fusarium mangiferae (Mango malformation disease fungus).